Consider the following 840-residue polypeptide: Sorting nexin-25 (840 aa).

The PXA domain occupies 1–164; the sequence is MDKALKEVFD…MLLAQLAYRE (164 aa). The RGS domain occupies 287 to 401; the sequence is QFEDILANTF…IVSDLYEKLL (115 aa). Positions 434 to 499 form a coiled coil; that stretch reads TNQINEQASF…RTDLQLHMAR (66 aa). The region spanning 508–628 is the PX domain; sequence GMWKASITSG…AFLSPSPDYL (121 aa). Ser-665 carries the post-translational modification Phosphoserine.

It belongs to the sorting nexin family.

The protein localises to the endosome membrane. In terms of biological role, may be involved in several stages of intracellular trafficking. The protein is Sorting nexin-25 (SNX25) of Homo sapiens (Human).